The primary structure comprises 2471 residues: Probable polyketide synthase 24 (2471 aa).

The region spanning 21–449 (ENLVAIVGVG…GSNCCLVLSQ (429 aa)) is the Ketosynthase family 3 (KS3) domain. Active-site for beta-ketoacyl synthase activity residues include cysteine 190, histidine 332, and histidine 372. The segment at 654-687 (GIKASFMLGHSLGEVTTAYCSGMIDIDQLCYLIY) is acyl/malonyl transferase. The active-site For acyl/malonyl transferase activity is the serine 664. The segment at 953–1075 (ISILGNSMQD…SNFHLNSNDN (123 aa)) is N-terminal hotdog fold. The 293-residue stretch at 953-1245 (ISILGNSMQD…VKSLTPVKDP (293 aa)) folds into the PKS/mFAS DH domain. Residue histidine 987 is the Proton acceptor; for dehydratase activity of the active site. The C-terminal hotdog fold stretch occupies residues 1094-1245 (NLSSIPWDEF…VKSLTPVKDP (152 aa)). Residue aspartate 1157 is the Proton donor; for dehydratase activity of the active site. Residues 1426–1469 (IINEQQQQQQQQQQQQQQQQQQQQQLLNNENNKESLKNLLVNCN) adopt a coiled-coil conformation. The region spanning 2336 to 2413 (SSSTNVKNKF…MVYQIINDSL (78 aa)) is the Carrier domain. Serine 2373 is subject to O-(pantetheine 4'-phosphoryl)serine.

Pantetheine 4'-phosphate is required as a cofactor.

Functionally, probable polyketide synthase. This Dictyostelium discoideum (Social amoeba) protein is Probable polyketide synthase 24 (pks24).